The chain runs to 196 residues: Calcium channel flower (196 aa).

A run of 3 helical transmembrane segments spans residues 36–56, 67–89, and 114–134; these read LGIV…LSII, IIQM…ICIE, and AVPP…GLIF.

It belongs to the calcium channel flower family. Homomultimer. Associates with the dally/ magu complex.

The protein resides in the cell membrane. It is found in the cytoplasmic vesicle. Its subcellular location is the secretory vesicle. The protein localises to the synaptic vesicle membrane. It localises to the presynaptic cell membrane. The protein resides in the endosome. Its activity is regulated as follows. Channel activity is inhibited by La(3+), which reduces Ca(2+) influx and thus inhibits it's function in promoting activity-dependent bulk endocytosis (ADBE) in response to high stimuli. Functionally, transmembrane protein which mediates synaptic endocytosis, fitness-based cell culling, neuronal culling, morphogen gradient scaling, and calcium transport. Regulates synaptic endocytosis and hence couples exo- with endocytosis. Controls two major modes of synaptic vesicle (SV) endocytosis in the synaptic boutons of neuromuscular junctions (NMJs); Ca(2+) channel-independent Clathrin-mediated endocytosis (CME) in response to mild stimulation, and Ca(2+) channel-dependent activity-dependent bulk endocytosis (ADBE) in response to strong stimulation. Functions in ADBE and subsequent SV reformation from bulk endosomes by initiating Ca(2+) channel-dependent phosphatidylinositol 4,5-bisphosphate (PtdIns(4,5)P2) compartmentalization in synaptic boutons. There it acts at the periactive zone to provide the low Ca(2+) levels required to initiate Calcineurin activation and upregulate PtdIns(4,5)P2. Conversely PtdIns(4,5)P2 enhances fwe Ca(2+) channel-activity, establishing a positive feedback loop that induces PtdIns(4,5)P2 microdomain at the periactive zone. These microdomains trigger bulk membrane invagination (i.e. ADBE) by triggering actin polymerization while also promoting localization of fwe to bulk endosomes, thereby removing the ADBE trigger to reduce endocytosis and prevent excess membrane uptake. PtdIns(4,5)P2 then promotes SV reformation from the bulk endosomes, to coordinate ADBE and subsequent SV reformation. Different combinations of the flower isoforms at the cell membrane are also required for the identification and elimination of suboptimal or supernumerary cells during development, regeneration, and adulthood. Required for the recognition and elimination of unfit cells in the developing wing during cell competition. In the developing pupal retina, mediates the elimination of unwanted postmitotic neurons, including supernumerary photoreceptor neurons that form at the periphery of the retina and are contained within incomplete ommatidia units. Also required for efficient elimination and replacement of old neurons by newly generated neurons during regeneration in the adult brain following mechanical injury. Downstream of the flower fitness fingerprints, cells identified as unwanted or unfit are eliminated via apoptosis through the expression of ahuizotl (azot). However, the cells marked for elimination by the flower isoforms only undergo apoptosis if additional thresholds are met; (1) their neighboring fit/healthy cells express different levels of the fwe isoforms, and (2) the levels of the protective signal SPARC expressed by the loser or unwanted cells are unable to inhibit caspase activation. These additional thresholds for flower-mediated apoptosis, allows useful cells to recover from transient and limited stress before they are unnecessarily eliminated. Functions with dally and magu in a mechanism of scaling, which utilises apoptosis to ensure that the dpp morphogen gradient, which mediates organ growth, remains proportional to the size of the growing wing. In this mechanism, fwe represses dally- and Magu-dependent activity in expanding the gradient, and dally/Magu inhibits fwe-dependent apoptosis to keep cell death rate low. When the levels of these different proteins are optimally regulated the gradient correctly scales with organ growth but when this fails, fwe-mediated apoptosis is activated to trim the developing tissue to match the correct size of the gradient. This is Calcium channel flower from Drosophila virilis (Fruit fly).